Here is a 535-residue protein sequence, read N- to C-terminus: CTP synthase (535 aa).

Residues 1-267 are amidoligase domain; that stretch reads MTKYIFVTGG…DQIVCDHLKL (267 aa). S13 is a CTP binding site. S13 provides a ligand contact to UTP. Residue 14 to 19 coordinates ATP; it reads SLGKGI. Residue Y54 coordinates L-glutamine. Residue D71 participates in ATP binding. Residues D71 and E141 each coordinate Mg(2+). Residues 148 to 150, 188 to 193, and K224 contribute to the CTP site; these read DIE and KTKPTQ. UTP is bound by residues 188–193 and K224; that span reads KTKPTQ. 240–242 contributes to the ATP binding site; it reads RDA. Positions 292–534 constitute a Glutamine amidotransferase type-1 domain; sequence KIALVGKYVE…VKASLTNKES (243 aa). G354 contacts L-glutamine. C381 functions as the Nucleophile; for glutamine hydrolysis in the catalytic mechanism. L-glutamine is bound by residues 382 to 385, E405, and R462; that span reads LGMQ. Catalysis depends on residues H507 and E509.

It belongs to the CTP synthase family. As to quaternary structure, homotetramer.

The catalysed reaction is UTP + L-glutamine + ATP + H2O = CTP + L-glutamate + ADP + phosphate + 2 H(+). The enzyme catalyses L-glutamine + H2O = L-glutamate + NH4(+). It carries out the reaction UTP + NH4(+) + ATP = CTP + ADP + phosphate + 2 H(+). It participates in pyrimidine metabolism; CTP biosynthesis via de novo pathway; CTP from UDP: step 2/2. Its activity is regulated as follows. Allosterically activated by GTP, when glutamine is the substrate; GTP has no effect on the reaction when ammonia is the substrate. The allosteric effector GTP functions by stabilizing the protein conformation that binds the tetrahedral intermediate(s) formed during glutamine hydrolysis. Inhibited by the product CTP, via allosteric rather than competitive inhibition. Catalyzes the ATP-dependent amination of UTP to CTP with either L-glutamine or ammonia as the source of nitrogen. Regulates intracellular CTP levels through interactions with the four ribonucleotide triphosphates. The chain is CTP synthase from Bacillus anthracis (strain A0248).